The primary structure comprises 163 residues: Disulfide bond formation protein B (163 aa).

Topologically, residues 1–9 (MKKLTYRKI) are cytoplasmic. The helical transmembrane segment at 10–26 (QSFQAIITVLVIFASFY) threads the bilayer. The Periplasmic portion of the chain corresponds to 27–44 (LEYAAGLQPCPLCLMQRV). C36 and C39 are oxidised to a cystine. Residues 45 to 58 (CVFILLGLMGVSLG) traverse the membrane as a helical segment. Over 59 to 64 (TVKKAH) the chain is Cytoplasmic. Residues 65–82 (IVSLIQFQVACAGLYFSL) form a helical membrane-spanning segment. Residues 83 to 139 (RQLWLQSLPSDQAPACMPGLDVLIQYFPWQTVAKALFWGAGDCAEVTWTMFGVSMPG) are Periplasmic-facing. C98 and C125 are disulfide-bonded. Residues 140-158 (WAAMYFLSMAIMGLFLFFR) form a helical membrane-spanning segment. The Cytoplasmic portion of the chain corresponds to 159–163 (TRTIN).

Belongs to the DsbB family.

The protein resides in the cell inner membrane. Required for disulfide bond formation in some periplasmic proteins. Acts by oxidizing the DsbA protein. This is Disulfide bond formation protein B from Legionella pneumophila (strain Lens).